We begin with the raw amino-acid sequence, 932 residues long: Protocadherin gamma-A3 (932 aa).

The signal sequence occupies residues 1 to 29; that stretch reads MTNCLSFRNGRGLALLCALLGTLCETGSG. 6 consecutive Cadherin domains span residues 30-133, 134-242, 243-347, 348-452, 453-562, and 570-682; these read QIRY…APNF, PTEE…PPMF, TQPE…APEI, TITS…PPTF, PHLS…APEI, and DGST…EPSA. Topologically, residues 30–692 are extracellular; that stretch reads QIRYSVSEEL…KPNDSDLTLY (663 aa). N-linked (GlcNAc...) asparagine glycosylation is found at asparagine 265, asparagine 419, and asparagine 545. N-linked (GlcNAc...) asparagine glycosylation occurs at asparagine 685. Residues 693–713 form a helical membrane-spanning segment; sequence LVVAVAAVSCVFLALVIVLLA. Residues 714–932 lie on the Cytoplasmic side of the membrane; the sequence is HRLRRWHKSR…KKKSGKKEKK (219 aa). Disordered stretches follow at residues 806 to 841 and 902 to 932; these read LLQQ…WPNN and ATLT…KEKK. The segment covering 922 to 932 has biased composition (basic residues); it reads NKKKSGKKEKK.

It localises to the cell membrane. Potential calcium-dependent cell-adhesion protein. May be involved in the establishment and maintenance of specific neuronal connections in the brain. This chain is Protocadherin gamma-A3 (PCDHGA3), found in Pan troglodytes (Chimpanzee).